A 359-amino-acid chain; its full sequence is 4-galactosyl-N-acetylglucosaminide 3-alpha-L-fucosyltransferase 9 (359 aa).

Topologically, residues 1-11 (MTSASKGILRP) are cytoplasmic. A helical; Signal-anchor for type II membrane protein membrane pass occupies residues 12 to 32 (FLIVCIILACSMVCLFIYIKP). Residues 33–359 (TNSWIFSPME…VGNLEKWFWN (327 aa)) are Lumenal-facing. The N-linked (GlcNAc...) asparagine glycan is linked to Asn62. Residues 63–168 (ETTILIWVWP…RRDSDIQVPY (106 aa)) form an acceptor-binding region. Gln75 contacts a beta-D-galactosyl-(1-&gt;4)-N-acetyl-beta-D-glucosaminyl derivative. 3 cysteine pairs are disulfide-bonded: Cys82–Cys335, Cys91–Cys338, and Cys190–Cys238. N-linked (GlcNAc...) asparagine glycosylation is present at Asn101. Glu137 is an a beta-D-galactosyl-(1-&gt;4)-N-acetyl-beta-D-glucosaminyl derivative binding site. Glu137 functions as the Nucleophile in the catalytic mechanism. Position 137 (Glu137) interacts with GDP-beta-L-fucose. N-linked (GlcNAc...) asparagine glycosylation occurs at Asn153. Residues Tyr168, Val192, Ser194, Asn195, Arg202, Val226, Tyr241, Asn246, Tyr252, Glu255, and Lys256 each coordinate GDP-beta-L-fucose. Residues 169-326 (GFLTVSTNPF…NWRKDFTVNL (158 aa)) form a donor-binding region. An acceptor-binding region spans residues 327-359 (PRFWESHACLACDHVKRHQEYKSVGNLEKWFWN).

The protein belongs to the glycosyltransferase 10 family. As to quaternary structure, homodimer. In terms of processing, N-glycosylated with complex-type N-glycans.

It localises to the golgi apparatus. The protein resides in the trans-Golgi network membrane. The protein localises to the golgi apparatus membrane. It carries out the reaction a beta-D-galactosyl-(1-&gt;4)-N-acetyl-beta-D-glucosaminyl derivative + GDP-beta-L-fucose = a beta-D-galactosyl-(1-&gt;4)-[alpha-L-fucosyl-(1-&gt;3)]-N-acetyl-beta-D-glucosaminyl derivative + GDP + H(+). The enzyme catalyses an alpha-Neu5Ac-(2-&gt;3)-beta-D-Gal-(1-&gt;4)-beta-D-GlcNAc-(1-&gt;3)-beta-D-Gal-(1-&gt;4)-beta-D-GlcNAc derivative + GDP-beta-L-fucose = an alpha-Neu5Ac-(2-&gt;3)-beta-D-Gal-(1-&gt;4)-beta-D-GlcNAc-(1-&gt;3)-beta-D-Gal-(1-&gt;4)-[alpha-L-Fuc-(1-&gt;3)]-beta-D-GlcNAc derivative + GDP + H(+). It catalyses the reaction alpha-N-glycoloylneuraminosyl-(2-&gt;3)-beta-D-galactosyl-(1-&gt;4)-N-acetyl-beta-D-glucosaminyl-(1-&gt;3)-beta-D-galactosyl-(1-&gt;4)-N-acetyl-beta-D-glucosaminyl-(1-&gt;3)-beta-D-galactosyl-(1-&gt;4)-beta-D-glucosyl-(1&lt;-&gt;1')-ceramide + GDP-beta-L-fucose = alpha-N-glycoloylneuraminosyl-(2-&gt;3)-beta-D-galactosyl-(1-&gt;4)-N-acetyl-beta-D-glucosaminyl-(1-&gt;3)-beta-D-galactosyl-(1-&gt;4)-[alpha-L-fucosyl-(1-&gt;3)]-N-acetyl-beta-D-glucosaminyl-(1-&gt;3)-beta-D-galactosyl-(1-&gt;4)-beta-D-glucosyl-(1&lt;-&gt;1')-ceramide + GDP + H(+). The catalysed reaction is alpha-D-galactosyl-(1-&gt;3)-beta-D-galactosyl-(1-&gt;4)-N-acetyl-beta-D-glucosaminyl-(1-&gt;3)-beta-D-galactosyl-(1-&gt;4)-beta-D-glucosyl-(1&lt;-&gt;1')-ceramide + GDP-beta-L-fucose = a neolactoside IV(3)-alpha-Gal,III(3)-alpha-Fuc-nLc4Cer + GDP + H(+). It carries out the reaction a neolactoside nLc4Cer + GDP-beta-L-fucose = a neolactoside III(3)-alpha-Fuc-nLc4Cer + GDP + H(+). The enzyme catalyses an N-acetyl-alpha-neuraminyl-(2-&gt;3)-beta-D-galactosyl-(1-&gt;4)-N-acetyl-beta-D-glucosaminyl derivative + GDP-beta-L-fucose = an alpha-Neu5Ac-(2-&gt;3)-beta-D-Gal-(1-&gt;4)-[alpha-L-Fuc-(1-&gt;3)]-beta-D-GlcNAc derivative + GDP + H(+). It catalyses the reaction beta-D-Gal-(1-&gt;4)-beta-D-GlcNAc-(1-&gt;3)-beta-D-Gal-(1-&gt;4)-D-Glc + GDP-beta-L-fucose = beta-D-Gal-(1-&gt;4)-[alpha-L-Fuc-(1-&gt;3)]-beta-D-GlcNAc-(1-&gt;3)-beta-D-Gal-(1-&gt;4)-D-Glc + GDP + H(+). The catalysed reaction is an alpha-L-Fuc-(1-&gt;2)-beta-D-Gal-(1-&gt;4)-beta-D-GlcNAc derivative + GDP-beta-L-fucose = an alpha-L-Fuc-(1-&gt;2)-beta-D-Gal-(1-&gt;4)-[alpha-L-Fuc-(1-&gt;3)]-beta-D-GlcNAc derivative + GDP + H(+). It functions in the pathway protein modification; protein glycosylation. It participates in glycolipid biosynthesis. Its activity is regulated as follows. Activated by Mn2+. Catalyzes alpha(1-&gt;3) linkage of fucosyl moiety transferred from GDP-beta-L-fucose to N-acetyl glucosamine (GlcNAc) within type 2 lactosamine (LacNAc, beta-D-Gal-(1-&gt;4)-beta-D-GlcNAc-) glycan attached to glycolipids and N- or O-linked glycoproteins. Fucosylates distal type 2 LacNAc and its fucosylated (H-type 2 LacNAc) and sialylated (sialyl-type 2 LacNAc) derivatives to form Lewis x (Lex) (CD15) and Lewis y (Ley) antigenic epitopes involved in cell adhesion and differentiation. Generates Lex epitopes in the brain, presumably playing a role in the maintenance of neuronal stemness and neurite outgrowth in progenitor neural cells. Fucosylates the internal type 2 LacNAc unit of the polylactosamine chain to form VIM-2 antigen that serves as recognition epitope for SELE. Can also modify milk oligosaccharides in particular type 2 tetrasaccharide LNnT. This chain is 4-galactosyl-N-acetylglucosaminide 3-alpha-L-fucosyltransferase 9, found in Bos taurus (Bovine).